A 373-amino-acid chain; its full sequence is tRNA-specific 2-thiouridylase MnmA (373 aa).

ATP-binding positions include 12 to 19 (GMSGGVDS) and M38. Residues 98–100 (NPD) are interaction with target base in tRNA. The active-site Nucleophile is the C103. Residues C103 and C200 are joined by a disulfide bond. An ATP-binding site is contributed by G127. An interaction with tRNA region spans residues 150-152 (KDQ). Catalysis depends on C200, which acts as the Cysteine persulfide intermediate. An interaction with tRNA region spans residues 312 to 313 (RY).

This sequence belongs to the MnmA/TRMU family.

Its subcellular location is the cytoplasm. It catalyses the reaction S-sulfanyl-L-cysteinyl-[protein] + uridine(34) in tRNA + AH2 + ATP = 2-thiouridine(34) in tRNA + L-cysteinyl-[protein] + A + AMP + diphosphate + H(+). Its function is as follows. Catalyzes the 2-thiolation of uridine at the wobble position (U34) of tRNA, leading to the formation of s(2)U34. This Streptococcus pyogenes serotype M6 (strain ATCC BAA-946 / MGAS10394) protein is tRNA-specific 2-thiouridylase MnmA.